A 450-amino-acid chain; its full sequence is MGKYFGTDGVRGEANVELTPELAFKLGRFGGYVLSQHETERPRVFVARDTRISGEMLEAALIAGLLSVGIEVYKLGVLATPGVSYLVRTEKASAGVMISASHNPALDNGIKFFGSDGFKLADEQELEIEALLDAKKDLLPRPSAEGLGALVDYPEGLRKYERFLVTTGADLDGLKIALDTANGAASVSARNVFLDLNADITVIGENPNGLNINDGIGSTHPEKLQELMTETASDIGLAFDGDSDRLIAVDENGAIVDGDKIMFIIGKYLSEKGLLAKNTIVTTVMSNLGFHKALDSCGIHKKVTAVGDRYVVEEMRQFGYNLGGEQSGHVIIMDYNTTGDGQLTAVQLTKIMKETGKTLSELASEVTIYPQKLVNIRVDNSMKERAMEVPAIAEVIAQMEGEMAGNGRILVRPSGTEPLLRVMAEAPSNEEVDYYVDTIAAVVRAEIGLD.

The active-site Phosphoserine intermediate is the serine 101. Mg(2+) is bound by residues serine 101, aspartate 240, aspartate 242, and aspartate 244. A Phosphoserine modification is found at serine 101.

The protein belongs to the phosphohexose mutase family. Requires Mg(2+) as cofactor. Activated by phosphorylation.

The catalysed reaction is alpha-D-glucosamine 1-phosphate = D-glucosamine 6-phosphate. Its function is as follows. Catalyzes the conversion of glucosamine-6-phosphate to glucosamine-1-phosphate. In Streptococcus equi subsp. zooepidemicus (strain H70), this protein is Phosphoglucosamine mutase.